We begin with the raw amino-acid sequence, 609 residues long: MIQVLLVTICLAAFPYQGSSIILESGNVNDYEIVYPRKVTALPKGAVQPKYEDAMQYELKVSGEPVVLHLEKNKQLFSKDYSETHYSPDGREITTYPLVEDHCYYHGRIENDADSTASISACNGLKGHFKLQGEMYLIEPLKLPDSEAHAVYKYENVEKEDEALKMCGVTQNWESYEPIKKASQLVVTAEHQKYNPFRFVELFLVVDKAMVTKNNGDLDKIKTRMYEIVNTVNEIYRYMYIHVALVGLEIWSNEDKITVKPEAGYTLNAFGEWRKTDLLTRKKHDNAQLLTAIDLDRVIGLAYVGSMCHPKRSTGIIQDYSEINLVVAVIMAHEMGHNLGINHDSGYCSCGDYACIMRPEISPEPSTFFSNCSYFECWDFIMNHNPECILNEPLGTDIISPPVCGNELLEVGEECDCGTPENCQNECCDAATCKLKSGSQCGHGDCCEQCKFSKSGTECRASMSECDPAEHCTGQSSECPADVFHKNGQPCLDNYGYCYNGNCPIMYHQCYDLFGADVYEAEDSCFERNQKGNYYGYCRKENGNKIPCAPEDVKCGRLYCKDNSPGQNNPCKMFYSNEDEHKGMVLPGTKCADGKVCSNGHCVDVATAY.

Residues 1–20 (MIQVLLVTICLAAFPYQGSS) form the signal peptide. Residues 21 to 189 (IILESGNVND…KKASQLVVTA (169 aa)) constitute a propeptide that is removed on maturation. In terms of domain architecture, Peptidase M12B spans 198 to 393 (RFVELFLVVD…HNPECILNEP (196 aa)). The Ca(2+) site is built by Glu201 and Asp285. Intrachain disulfides connect Cys308–Cys388, Cys348–Cys372, and Cys350–Cys355. Residue His333 coordinates Zn(2+). Glu334 is an active-site residue. His337 and His343 together coordinate Zn(2+). Asn371 carries N-linked (GlcNAc...) asparagine glycosylation. Ca(2+) is bound by residues Cys388, Asn391, Val403, Asn406, Leu408, Glu410, Glu413, and Asp416. One can recognise a Disintegrin domain in the interval 401 to 487 (PPVCGNELLE…ECPADVFHKN (87 aa)). Cystine bridges form between Cys404–Cys433, Cys415–Cys428, Cys417–Cys423, Cys427–Cys450, Cys441–Cys447, Cys446–Cys472, Cys459–Cys479, Cys466–Cys498, Cys491–Cys503, Cys510–Cys560, Cys525–Cys571, Cys538–Cys548, Cys555–Cys597, and Cys591–Cys602. The short motif at 465–467 (ECD) is the D/ECD-tripeptide element. Positions 467, 468, 470, 482, and 483 each coordinate Ca(2+).

It belongs to the venom metalloproteinase (M12B) family. P-III subfamily. P-IIIa sub-subfamily. As to quaternary structure, monomer. Zn(2+) serves as cofactor. Expressed by the venom gland.

It is found in the secreted. Its function is as follows. Snake venom metalloproteinase that impairs hemostasis in the envenomed animal. The chain is Zinc metalloproteinase-disintegrin-like VMP-III from Crotalus viridis viridis (Prairie rattlesnake).